The primary structure comprises 417 residues: Phosphoglycerate kinase, cytosolic (417 aa).

Positions 23, 24, 25, 26, 39, 61, 62, 64, 65, 132, 168, and 169 each coordinate (2R)-3-phosphoglycerate. Gly214 and Ala215 together coordinate ADP. Position 214 (Gly214) interacts with CDP. Ala215 and Lys216 together coordinate AMP. Position 215 (Ala215) interacts with ATP. Ala215 lines the Mg(2+) pocket. Lys216 provides a ligand contact to (2R)-3-phosphoglycerate. Asp219 contacts CDP. Mg(2+) is bound at residue Asp219. The ADP site is built by Lys220 and Gly238. Lys220 is a binding site for AMP. An ATP-binding site is contributed by Lys220. Gly238 is a binding site for CDP. The AMP site is built by Ala239 and Ala311. Ala239 and Ala311 together coordinate ATP. Residues Ala311 and Asn335 each coordinate ADP. Gly336 and Phe341 together coordinate CDP. Phe341, Glu342, Asp374, and Thr375 together coordinate ADP. Glu342 contributes to the AMP binding site. Glu342, Asp374, and Thr375 together coordinate ATP. Asp374 is a binding site for Mg(2+).

It belongs to the phosphoglycerate kinase family. In terms of assembly, monomer. Mg(2+) serves as cofactor.

The protein resides in the cytoplasm. The catalysed reaction is (2R)-3-phosphoglycerate + ATP = (2R)-3-phospho-glyceroyl phosphate + ADP. Its pathway is carbohydrate degradation; glycolysis; pyruvate from D-glyceraldehyde 3-phosphate: step 2/5. The sequence is that of Phosphoglycerate kinase, cytosolic (PGKB) from Crithidia fasciculata.